We begin with the raw amino-acid sequence, 33 residues long: Photosystem II reaction center protein Psb30 (33 aa).

The helical transmembrane segment at 5–25 (VIAQLASLALIIVLGPLVIGL) threads the bilayer.

Belongs to the Psb30/Ycf12 family. As to quaternary structure, PSII is composed of 1 copy each of membrane proteins PsbA, PsbB, PsbC, PsbD, PsbE, PsbF, PsbH, PsbI, PsbJ, PsbK, PsbL, PsbM, PsbT, PsbX, PsbY, PsbZ, Psb30/Ycf12, peripheral proteins of the oxygen-evolving complex and a large number of cofactors. It forms dimeric complexes.

It localises to the plastid. Its subcellular location is the chloroplast thylakoid membrane. A core subunit of photosystem II (PSII), probably helps stabilize the reaction center. This chain is Photosystem II reaction center protein Psb30, found in Chara vulgaris (Common stonewort).